We begin with the raw amino-acid sequence, 336 residues long: MIQKNWQELIKPNKVEFSSSSRTRATLVAEPLERGFGLTLGNALRRVLLSSLRGAAVTAVQIDGVLHEFSSIPGVREDVTDIVLNIKEIAIKMDGDDAKRMVVRKQGPGVVTAGDIQTVGDIEILNPEHVICTLDEGAEIRMEFTVNNGKGYVPAERNRAEDAPIGLIPVDSLYSPVKKVSYKVENTREGQVLDYDKLNMTIETDGSITGEDAVAFAARILQDQLGVFVNFDEPQKETEEEAVTELAFNPALLKKVDELELSVRSANCLKNDNIVYIGDLIQKTEAEMLRTPNFGRKSLNEIKEVLASMGLHLGMEVPAWPPENIEDLAKRYEDQY.

The tract at residues Met1–Asp232 is alpha N-terminal domain (alpha-NTD). Positions Phe248–Tyr336 are alpha C-terminal domain (alpha-CTD).

Belongs to the RNA polymerase alpha chain family. Homodimer. The RNAP catalytic core consists of 2 alpha, 1 beta, 1 beta' and 1 omega subunit. When a sigma factor is associated with the core the holoenzyme is formed, which can initiate transcription.

It catalyses the reaction RNA(n) + a ribonucleoside 5'-triphosphate = RNA(n+1) + diphosphate. Functionally, DNA-dependent RNA polymerase catalyzes the transcription of DNA into RNA using the four ribonucleoside triphosphates as substrates. The protein is DNA-directed RNA polymerase subunit alpha of Rhizobium etli (strain CIAT 652).